A 92-amino-acid polypeptide reads, in one-letter code: Small ribosomal subunit protein uS19 (92 aa).

It belongs to the universal ribosomal protein uS19 family.

Protein S19 forms a complex with S13 that binds strongly to the 16S ribosomal RNA. This Bradyrhizobium sp. (strain BTAi1 / ATCC BAA-1182) protein is Small ribosomal subunit protein uS19.